The chain runs to 329 residues: NADH-quinone oxidoreductase subunit H (329 aa).

The next 9 membrane-spanning stretches (helical) occupy residues Leu9–Ile29, Gly42–Phe62, Phe75–Ile95, Ile117–Gly137, Ile154–Val174, Gly188–Ala208, Leu238–Ile258, Trp269–Trp291, and Trp309–Ile329.

It belongs to the complex I subunit 1 family. NDH-1 is composed of 14 different subunits. Subunits NuoA, H, J, K, L, M, N constitute the membrane sector of the complex.

The protein resides in the cell inner membrane. The enzyme catalyses a quinone + NADH + 5 H(+)(in) = a quinol + NAD(+) + 4 H(+)(out). In terms of biological role, NDH-1 shuttles electrons from NADH, via FMN and iron-sulfur (Fe-S) centers, to quinones in the respiratory chain. The immediate electron acceptor for the enzyme in this species is believed to be ubiquinone. Couples the redox reaction to proton translocation (for every two electrons transferred, four hydrogen ions are translocated across the cytoplasmic membrane), and thus conserves the redox energy in a proton gradient. This subunit may bind ubiquinone. In Helicobacter pylori (strain P12), this protein is NADH-quinone oxidoreductase subunit H.